Reading from the N-terminus, the 198-residue chain is Regulation of enolase protein 1 (198 aa).

It localises to the cytoplasm. Its function is as follows. Functions in the galactose metabolic pathway via the GAL83 protein and that it may control the level of ENO1. The chain is Regulation of enolase protein 1 (REE1) from Saccharomyces cerevisiae (strain ATCC 204508 / S288c) (Baker's yeast).